The chain runs to 530 residues: UDP-glucuronosyltransferase 2B7 (530 aa).

The N-terminal stretch at 1–17 is a signal peptide; the sequence is MPQKWISALLLLQISFC. Asn-316 carries N-linked (GlcNAc...) asparagine glycosylation. UDP-alpha-D-glucuronate is bound by residues 374–380 and Glu-400; that span reads THGGANG. The helical transmembrane segment at 496-516 threads the bilayer; sequence IGFLLACVLAIVLLAVKCCLF.

It belongs to the UDP-glycosyltransferase family.

It localises to the endoplasmic reticulum membrane. It catalyses the reaction glucuronate acceptor + UDP-alpha-D-glucuronate = acceptor beta-D-glucuronoside + UDP + H(+). The enzyme catalyses 17alpha-estradiol + UDP-alpha-D-glucuronate = 17alpha-estradiol 17-O-(beta-D-glucuronate) + UDP + H(+). The catalysed reaction is 17beta-estradiol + UDP-alpha-D-glucuronate = 17beta-estradiol 17-O-(beta-D-glucuronate) + UDP + H(+). It carries out the reaction 2-hydroxy-17beta-estradiol + UDP-alpha-D-glucuronate = 2-hydroxy-17beta-estradiol 3-O-(beta-D-glucuronate) + UDP + H(+). It catalyses the reaction 4-hydroxy-17beta-estradiol + UDP-alpha-D-glucuronate = 17beta-estradiol 4-O-(beta-D-glucuronate) + UDP + H(+). The enzyme catalyses 4-hydroxyestrone + UDP-alpha-D-glucuronate = estrone 4-O-(beta-D-glucuronate) + UDP + H(+). The catalysed reaction is 16alpha-hydroxyestrone + UDP-alpha-D-glucuronate = 16alpha-hydroxyestrone 16-O-(beta-D-glucuronate) + UDP + H(+). It carries out the reaction 16alpha,17beta-estriol + UDP-alpha-D-glucuronate = 16alpha,17beta-estriol 16-O-(beta-D-glucuronate) + UDP + H(+). It catalyses the reaction 16beta,17beta-estriol + UDP-alpha-D-glucuronate = 16beta,17beta-estriol 16-O-(beta-D-glucuronate) + UDP + H(+). The enzyme catalyses 16alpha,17alpha-estriol + UDP-alpha-D-glucuronate = 16alpha,17alpha-estriol 16-O-(beta-D-glucuronate) + UDP + H(+). The catalysed reaction is 16alpha,17alpha-estriol + UDP-alpha-D-glucuronate = 16alpha,17alpha-estriol 17-O-(beta-D-glucuronate) + UDP + H(+). It carries out the reaction epitestosterone + UDP-alpha-D-glucuronate = epitestosterone 17-O-(beta-D-glucuronate) + UDP + H(+). It catalyses the reaction hyodeoxycholate + UDP-alpha-D-glucuronate = hyodeoxycholate 6-O-(beta-D-glucuronate) + UDP + H(+). The enzyme catalyses hyocholate + UDP-alpha-D-glucuronate = hyocholate 6-O-(beta-D-glucuronate) + UDP + H(+). The catalysed reaction is all-trans-retinoate + UDP-alpha-D-glucuronate = all-trans-retinoyl-1-O-(beta-D-glucuronate) + UDP. It carries out the reaction all-trans-4-hydroxyretinoate + UDP-alpha-D-glucuronate = all-trans-4-hydroxy-4-O-(beta-D-glucuronide)-retinoate + UDP + H(+). It catalyses the reaction (E)-ferulate + UDP-alpha-D-glucuronate = (E)-ferulic acid beta-D-glucuronate ester + UDP. The enzyme catalyses 8-iso-prostaglandin F2alpha + UDP-alpha-D-glucuronate = 8-iso-prostaglandin F2alpha-glucuronide + UDP + H(+). The catalysed reaction is 5-epi-5-F2t-IsoP + UDP-alpha-D-glucuronate = 5-epi-5-F2t-IsoP-glucuronide + UDP + H(+). It carries out the reaction (5Z,8Z,11Z,14Z)-eicosatetraenoate + UDP-alpha-D-glucuronate = O-[(5Z),(8Z),(11Z),(14Z)-eicosatetraenoyl]-beta-D-glucuronate + UDP. It catalyses the reaction 15-hydroxy-(5Z,8Z,11Z,13E)-eicosatetraenoate + UDP-alpha-D-glucuronate = 15-O-(beta-D-glucuronosyl)-(5Z,8Z,11Z,14Z)-eicosatetraenoate + UDP + H(+). The enzyme catalyses 20-hydroxy-(5Z,8Z,11Z,14Z)-eicosatetraenoate + UDP-alpha-D-glucuronate = 20-O-(beta-D-glucuronosyl)-(5Z,8Z,11Z,14Z)-eicosatetraenoate + UDP + H(+). The catalysed reaction is (E)-ferulate + UDP-alpha-D-glucuronate = (E)-4-O-(beta-D-glucuronosyl)-ferulate + UDP + H(+). It carries out the reaction prostaglandin B1 + UDP-alpha-D-glucuronate = 15-O-(beta-D-glucuronosyl)-prostaglandin B1 + UDP + H(+). It catalyses the reaction mycophenolate + UDP-alpha-D-glucuronate = mycophenolic acid O-acyl-beta-D-glucuronide + UDP. The enzyme catalyses losartan + UDP-alpha-D-glucuronate = losartan-2-N-beta-D-glucuronide + UDP. The catalysed reaction is candesartan + UDP-alpha-D-glucuronate = candesartan O-beta-D-glucuronoside + UDP. It carries out the reaction candesartan + UDP-alpha-D-glucuronate = candesartan-2-N-beta-D-glucuronide + UDP. It catalyses the reaction zolasartan + UDP-alpha-D-glucuronate = zolarsartan O-beta-D-glucuronoside + UDP. Functionally, UDP-glucuronosyltransferase (UGT) that catalyzes phase II biotransformation reactions in which lipophilic substrates are conjugated with glucuronic acid to increase the metabolite's water solubility, thereby facilitating excretion into either the urine or bile. Essential for the elimination and detoxification of drugs, xenobiotics and endogenous compounds. Catalyzes the glucuronidation of endogenous steroid hormones such as androgens (epitestosterone, androsterone) and estrogens (estradiol, epiestradiol, estriol, catechol estrogens). Also regulates the levels of retinoic acid, a major metabolite of vitamin A involved in apoptosis, cellular growth and differentiation, and embryonic development. Contributes to bile acid (BA) detoxification by catalyzing the glucuronidation of BA substrates, which are natural detergents for dietary lipids absorption. Involved in the glucuronidation of arachidonic acid (AA) and AA-derived eicosanoids including 15-HETE, 20-HETE, PGE2, PGB1 and F2-isoprostanes (8-iso-PGF2alpha and 5-epi-5-F2t-IsoP). Involved in the glucuronidation of the phytochemical ferulic acid at the phenolic or the carboxylic acid group. Involved in the glucuronidation of the AGTR1 angiotensin receptor antagonist losartan, caderastan and zolarsatan, drugs which can inhibit the effect of angiotensin II. Also metabolizes mycophenolate, an immunosuppressive agent. In Rattus norvegicus (Rat), this protein is UDP-glucuronosyltransferase 2B7.